A 670-amino-acid chain; its full sequence is Lebercilin-like protein (670 aa).

The interval Lys-30–Tyr-51 is disordered. Positions Phe-38 to Tyr-51 are enriched in polar residues. 2 coiled-coil regions span residues Leu-148–Glu-259 and Ala-305–Ile-336. A disordered region spans residues His-374–Thr-393. The stretch at Glu-420–Ile-440 forms a coiled coil. Disordered regions lie at residues Arg-495 to Gly-516, Lys-557 to Lys-580, and Leu-609 to Ile-670. Composition is skewed to basic and acidic residues over residues Ser-560 to Ser-572 and Gly-621 to His-632. The span at Thr-651–Thr-662 shows a compositional bias: polar residues.

Belongs to the LCA5 family.

The sequence is that of Lebercilin-like protein (LCA5L) from Homo sapiens (Human).